A 167-amino-acid chain; its full sequence is NAD(P)H-quinone oxidoreductase subunit I, chloroplastic (167 aa).

2 consecutive 4Fe-4S ferredoxin-type domains span residues G55–K84 and L95–E124. Positions 64, 67, 70, 74, 104, 107, 110, and 114 each coordinate [4Fe-4S] cluster.

It belongs to the complex I 23 kDa subunit family. As to quaternary structure, NDH is composed of at least 16 different subunits, 5 of which are encoded in the nucleus. The cofactor is [4Fe-4S] cluster.

It is found in the plastid. The protein resides in the chloroplast thylakoid membrane. It catalyses the reaction a plastoquinone + NADH + (n+1) H(+)(in) = a plastoquinol + NAD(+) + n H(+)(out). The enzyme catalyses a plastoquinone + NADPH + (n+1) H(+)(in) = a plastoquinol + NADP(+) + n H(+)(out). Its function is as follows. NDH shuttles electrons from NAD(P)H:plastoquinone, via FMN and iron-sulfur (Fe-S) centers, to quinones in the photosynthetic chain and possibly in a chloroplast respiratory chain. The immediate electron acceptor for the enzyme in this species is believed to be plastoquinone. Couples the redox reaction to proton translocation, and thus conserves the redox energy in a proton gradient. The sequence is that of NAD(P)H-quinone oxidoreductase subunit I, chloroplastic from Aethionema grandiflorum (Persian stone-cress).